Reading from the N-terminus, the 420-residue chain is Histidine--tRNA ligase (420 aa).

This sequence belongs to the class-II aminoacyl-tRNA synthetase family. In terms of assembly, homodimer.

It is found in the cytoplasm. The catalysed reaction is tRNA(His) + L-histidine + ATP = L-histidyl-tRNA(His) + AMP + diphosphate + H(+). In Mycobacterium marinum (strain ATCC BAA-535 / M), this protein is Histidine--tRNA ligase.